The sequence spans 190 residues: MTEDTSMQSTLNATLPETDMPLAEKEAAVEKQEYRNAMARLGSAVNIITTDGPGGRAGFTASAVCSVTDTPPTLLVCLNRSASVHPAFIQNQVLCVNTLADSHESLSNLFGGKTPMEQRFDAAEWTDLATGSPILTNALVSFDCKVTQITRVGTHDIMFCEVVALRCNDDCHGLAYFDRRYHPLMRQIAC.

It belongs to the non-flavoprotein flavin reductase family. RutF subfamily.

The catalysed reaction is FMNH2 + NAD(+) = FMN + NADH + 2 H(+). In terms of biological role, catalyzes the reduction of FMN to FMNH2 which is used to reduce pyrimidine by RutA via the Rut pathway. The chain is FMN reductase (NADH) RutF from Pantoea ananatis (strain LMG 20103).